The following is a 130-amino-acid chain: Small ribosomal subunit protein uS9 (130 aa).

Residues 109–130 (RMKERKKYGLKAARRAPQFSKR) form a disordered region. A compositionally biased stretch (basic residues) spans 111 to 130 (KERKKYGLKAARRAPQFSKR).

Belongs to the universal ribosomal protein uS9 family.

The chain is Small ribosomal subunit protein uS9 from Lachnoclostridium phytofermentans (strain ATCC 700394 / DSM 18823 / ISDg) (Clostridium phytofermentans).